A 103-amino-acid chain; its full sequence is Defensin-like protein 290 (103 aa).

The first 29 residues, 1 to 29 (MTALRRTISIIFVFYLSCTLFVNIFGVQA), serve as a signal peptide directing secretion. Disulfide bonds link Cys33-Cys50, Cys39-Cys55, Cys43-Cys57, Cys72-Cys92, Cys78-Cys98, and Cys84-Cys100.

The protein belongs to the DEFL family.

It localises to the secreted. The protein is Defensin-like protein 290 of Arabidopsis thaliana (Mouse-ear cress).